We begin with the raw amino-acid sequence, 328 residues long: Olfactory receptor 2AJ1 (328 aa).

The Extracellular segment spans residues 1 to 25 (MGHQNHTFSSDFILLGLFSSSPTSV). Asparagine 5 carries N-linked (GlcNAc...) asparagine glycosylation. The helical transmembrane segment at 26–49 (VFFLVLFVIFIMSVTENTLMILLI) threads the bilayer. At 50–57 (RSDSRLHT) the chain is on the cytoplasmic side. The chain crosses the membrane as a helical span at residues 58 to 79 (PMYFLLSHLSLMDILHVSNIVP). The Extracellular segment spans residues 80 to 100 (KMVTNFLSGSRTISFAGCGFQ). The cysteines at positions 97 and 189 are disulfide-linked. A helical transmembrane segment spans residues 101–120 (VFLSLTLLGGECLLLAAMSC). Over 121-139 (DRYVAICHPLRYPILMKEY) the chain is Cytoplasmic. Residues 140–158 (ASALMAGGSWLIGVFNSTV) form a helical membrane-spanning segment. At 159 to 195 (HTAYALQFPFCGSRAIDHFFCEVPAMLKLSCADTTRY) the chain is on the extracellular side. A helical transmembrane segment spans residues 196–219 (ERGVCVSAVIFLLIPFSLISASYG). Topologically, residues 220–236 (QIILTVLQMKSSEARKK) are cytoplasmic. Residues 237-259 (SFSTCSFHMIVVTMYYGPFIFTY) traverse the membrane as a helical segment. Over 260-272 (MRPKSYHTPGQDK) the chain is Extracellular. The chain crosses the membrane as a helical span at residues 273 to 292 (FLAIFYTILTPTLNPFIYSF). The Cytoplasmic portion of the chain corresponds to 293 to 328 (RNKDVLAVMKNMLKSNFLHKKMNRKIPECVFCLFLC).

This sequence belongs to the G-protein coupled receptor 1 family.

Its subcellular location is the cell membrane. Its function is as follows. Odorant receptor. The protein is Olfactory receptor 2AJ1 (OR2AJ1) of Homo sapiens (Human).